The primary structure comprises 493 residues: Transmembrane protein 184 homolog DDB_G0284525 (493 aa).

Positions 1–10 (MTQESSSSNH) are enriched in polar residues. Residues 1-25 (MTQESSSSNHYVDESSFDNNNNNNN) form a disordered region. 7 helical membrane passes run 46 to 66 (VPALYAMFALASLFVLLATIL), 87 to 107 (IVRIVFMIPIYAIYSLLSLLL), 119 to 139 (DCYEAYVLYMFFALCVSYGGG), 180 to 200 (YVLVRPAVTLASAIFEIFGLY), 212 to 232 (FYNAFIINVSVTVALYIVVLF), 254 to 274 (IVVFFCFWQSIAISGMTNFGW), and 293 to 313 (FLICFEMFGVAILHQYAFPYE). N-linked (GlcNAc...) asparagine glycans are attached at residues N415 and N416.

The protein belongs to the TMEM184 family.

It localises to the cell membrane. In terms of biological role, probable transporter. The protein is Transmembrane protein 184 homolog DDB_G0284525 (tmem184A) of Dictyostelium discoideum (Social amoeba).